We begin with the raw amino-acid sequence, 311 residues long: MKILKIATRKSALALWQSEHIKARLMAQHAGLQVELVGMKTKGDVILDTPLAKIGGKGLFTKELEDSMLSGQTHIAVHSLKDVPVAFLDGLVLAAICSREDVRDAMISQRYVKFDDLPQSAKVGTTSLRRKMQLLRMRPDLNIISLRGNVQTRLRKLKEGEFDAIILAMAGINRLNLADEVAHIYPFDIAQMTPAMGQGALGVEAVDDAQILEKIKFLNDERSVIETRVERDFVTLLEGGCQVPIGINARLASEEIEINAIVGLPDGSEVITENLTAKKSEFESVGKELAREFIARGAKELLKRAEEMANL.

At Cys-241 the chain carries S-(dipyrrolylmethanemethyl)cysteine.

The protein belongs to the HMBS family. As to quaternary structure, monomer. It depends on dipyrromethane as a cofactor.

The enzyme catalyses 4 porphobilinogen + H2O = hydroxymethylbilane + 4 NH4(+). It functions in the pathway porphyrin-containing compound metabolism; protoporphyrin-IX biosynthesis; coproporphyrinogen-III from 5-aminolevulinate: step 2/4. Its function is as follows. Tetrapolymerization of the monopyrrole PBG into the hydroxymethylbilane pre-uroporphyrinogen in several discrete steps. The polypeptide is Porphobilinogen deaminase (Campylobacter curvus (strain 525.92)).